Consider the following 641-residue polypeptide: Chaperone protein DnaK (641 aa).

T199 bears the Phosphothreonine; by autocatalysis mark. Positions 602-641 (MYADQADQAQQAGGQEEGQAKSADDAVDAEFEEVKDDDKK) are disordered. Over residues 604-615 (ADQADQAQQAGG) the composition is skewed to low complexity. Positions 626-641 (DAVDAEFEEVKDDDKK) are enriched in acidic residues.

It belongs to the heat shock protein 70 family.

Acts as a chaperone. The sequence is that of Chaperone protein DnaK from Marinobacter nauticus (strain ATCC 700491 / DSM 11845 / VT8) (Marinobacter aquaeolei).